The sequence spans 209 residues: Large ribosomal subunit protein uL3 (209 aa).

The tract at residues 133-152 (THGNSLSHRVPGSIGQNQTP) is disordered. Gln150 carries the post-translational modification N5-methylglutamine.

Belongs to the universal ribosomal protein uL3 family. In terms of assembly, part of the 50S ribosomal subunit. Forms a cluster with proteins L14 and L19. Methylated by PrmB.

Its function is as follows. One of the primary rRNA binding proteins, it binds directly near the 3'-end of the 23S rRNA, where it nucleates assembly of the 50S subunit. This is Large ribosomal subunit protein uL3 from Yersinia enterocolitica serotype O:8 / biotype 1B (strain NCTC 13174 / 8081).